A 531-amino-acid chain; its full sequence is Ceramide kinase (531 aa).

The tract at residues 1-115 is essential for enzyme activity; that stretch reads MGAMGAAEPL…SADEQLCHLW (115 aa). The tract at residues 1-125 is required for binding to sulfatide and phosphoinositides; that stretch reads MGAMGAAEPL…LQTLRGLLES (125 aa). The region spanning 128 to 278 is the DAGKc domain; sequence SRPKHLLVFI…IDVSSVHYHN (151 aa). Residues 138–140 and 170–174 contribute to the ATP site; these read NPF and TEHAN. 195-198 is a binding site for substrate; that stretch reads GGDG. D197 serves as the catalytic Proton donor/acceptor. ATP-binding positions include E202, 239–241, R304, and R310; that span reads GST. A phosphoserine mark is found at S340 and S408. 502 to 504 lines the ATP pocket; it reads DGE.

The cofactor is Ca(2+). Mg(2+) serves as cofactor. In terms of tissue distribution, high level expression in heart, brain, testis and pancreas; low expression in spleen, liver and lung; not detected in skeletal muscle.

It is found in the cytoplasm. The protein resides in the cell membrane. The enzyme catalyses an N-acylsphing-4-enine + ATP = an N-acylsphing-4-enine 1-phosphate + ADP + H(+). It carries out the reaction N-(hexanoyl)sphing-4-enine + ATP = N-hexanoylsphing-4-enine 1-phosphate + ADP + H(+). The catalysed reaction is N-(acetyl)-sphing-4-enine + ATP = N-(acetyl)-sphing-4-enine-1-phosphate + ADP + H(+). It catalyses the reaction N-hexadecanoylsphing-4-enine + ATP = N-(hexadecanoyl)-sphing-4-enine-1-phosphate + ADP + H(+). The enzyme catalyses N-hexanoyl-(4R)-hydroxysphinganine + ATP = N-hexanoyl-(4R)-hydroxysphinganine-1-phosphate + ADP + H(+). Its function is as follows. Catalyzes specifically the phosphorylation of ceramide to form ceramide 1-phosphate. Acts efficiently on natural and analog ceramides (C6, C8, C16 ceramides, and C8-dihydroceramide), to a lesser extent on C2-ceramide and C6-dihydroceramide, but not on other lipids, such as various sphingosines. Shows a greater preference for D-erythro isomer of ceramides. Binds phosphoinositides. This is Ceramide kinase (Cerk) from Mus musculus (Mouse).